The chain runs to 270 residues: tRNA pseudouridine synthase A (270 aa).

The Nucleophile role is filled by aspartate 60. The RNA binding stretch occupies residues phenylalanine 107–phenylalanine 111. Position 118 (tyrosine 118) interacts with substrate. The interval glutamine 168–arginine 172 is interaction with tRNA.

This sequence belongs to the tRNA pseudouridine synthase TruA family. As to quaternary structure, homodimer.

It carries out the reaction uridine(38/39/40) in tRNA = pseudouridine(38/39/40) in tRNA. Functionally, formation of pseudouridine at positions 38, 39 and 40 in the anticodon stem and loop of transfer RNAs. This chain is tRNA pseudouridine synthase A, found in Klebsiella pneumoniae subsp. pneumoniae (strain ATCC 700721 / MGH 78578).